We begin with the raw amino-acid sequence, 297 residues long: 2-dehydropantoate 2-reductase (297 aa).

Residues 11 to 16 (GAGAMG), asparagine 107, and alanine 133 contribute to the NADP(+) site. Residue asparagine 107 participates in substrate binding. Lysine 187 functions as the Proton donor in the catalytic mechanism. Positions 191, 195, 205, and 251 each coordinate substrate. Glutamate 263 is an NADP(+) binding site.

Belongs to the ketopantoate reductase family.

It is found in the cytoplasm. It catalyses the reaction (R)-pantoate + NADP(+) = 2-dehydropantoate + NADPH + H(+). Its pathway is cofactor biosynthesis; (R)-pantothenate biosynthesis; (R)-pantoate from 3-methyl-2-oxobutanoate: step 2/2. Catalyzes the NADPH-dependent reduction of ketopantoate into pantoic acid. The chain is 2-dehydropantoate 2-reductase from Listeria monocytogenes serovar 1/2a (strain ATCC BAA-679 / EGD-e).